The primary structure comprises 316 residues: uncharacterized protein (316 aa).

The protein belongs to the chlamydial CPn_0441/CT_007/TC_0275 family.

This is an uncharacterized protein from Chlamydia pneumoniae (Chlamydophila pneumoniae).